A 189-amino-acid chain; its full sequence is Ornithine decarboxylase antizyme 2 (189 aa).

The residue at position 186 (Ser-186) is a Phosphoserine.

This sequence belongs to the ODC antizyme family. In terms of assembly, interacts with ODC1 and thereby sterically blocks ODC homodimerization. Interacts with AZIN2; this interaction disrupts the interaction between the antizyme and ODC1.

It localises to the nucleus. Functionally, ornithine decarboxylase (ODC) antizyme protein that negatively regulates ODC activity and intracellular polyamine biosynthesis and uptake in response to increased intracellular polyamine levels. Binds to ODC monomers, inhibiting the assembly of the functional ODC homodimers. Does not target the ODC monomers for degradation, which allows a protein synthesis-independent restoration of ODC activity. Involved in the translocation of AZIN2 from ER-Golgi intermediate compartment (ERGIC) to the cytosol. This chain is Ornithine decarboxylase antizyme 2 (Oaz2), found in Mus musculus (Mouse).